A 231-amino-acid polypeptide reads, in one-letter code: NADH-ubiquinone oxidoreductase chain 4 (231 aa).

7 helical membrane passes run 1 to 21, 34 to 54, 63 to 85, 89 to 111, 128 to 148, 169 to 189, and 211 to 231; these read PIAG…YGII, MFLP…LTCL, IAYS…TPWG, AMAL…NTTY, ILPM…ATPP, TIIL…HMFL, and LLMT…ELVI.

It belongs to the complex I subunit 4 family.

The protein resides in the mitochondrion membrane. The enzyme catalyses a ubiquinone + NADH + 5 H(+)(in) = a ubiquinol + NAD(+) + 4 H(+)(out). Its function is as follows. Core subunit of the mitochondrial membrane respiratory chain NADH dehydrogenase (Complex I) that is believed to belong to the minimal assembly required for catalysis. Complex I functions in the transfer of electrons from NADH to the respiratory chain. The immediate electron acceptor for the enzyme is believed to be ubiquinone. This is NADH-ubiquinone oxidoreductase chain 4 (MT-ND4) from Porthidium ophryomegas (Slender hognose viper).